Consider the following 257-residue polypeptide: Imidazole glycerol phosphate synthase subunit HisF (257 aa).

Catalysis depends on residues Asp11 and Asp130.

It belongs to the HisA/HisF family. In terms of assembly, heterodimer of HisH and HisF.

It localises to the cytoplasm. It carries out the reaction 5-[(5-phospho-1-deoxy-D-ribulos-1-ylimino)methylamino]-1-(5-phospho-beta-D-ribosyl)imidazole-4-carboxamide + L-glutamine = D-erythro-1-(imidazol-4-yl)glycerol 3-phosphate + 5-amino-1-(5-phospho-beta-D-ribosyl)imidazole-4-carboxamide + L-glutamate + H(+). It functions in the pathway amino-acid biosynthesis; L-histidine biosynthesis; L-histidine from 5-phospho-alpha-D-ribose 1-diphosphate: step 5/9. Functionally, IGPS catalyzes the conversion of PRFAR and glutamine to IGP, AICAR and glutamate. The HisF subunit catalyzes the cyclization activity that produces IGP and AICAR from PRFAR using the ammonia provided by the HisH subunit. The protein is Imidazole glycerol phosphate synthase subunit HisF of Actinobacillus pleuropneumoniae serotype 7 (strain AP76).